Here is a 665-residue protein sequence, read N- to C-terminus: Adenylate cyclase 1 (665 aa).

A disordered region spans residues 1-25 (MLQRSESGFKDIESMQDSNADKPSR). Residues 7–24 (SGFKDIESMQDSNADKPS) are compositionally biased toward basic and acidic residues. 2 helical membrane-spanning segments follow: residues 33-53 (SLLG…LVGL) and 373-393 (AVSG…AHLI). The 51-residue stretch at 394 to 444 (TKSLNQLTDSANRLQDLDFATPIDVSSHVAEISTLNGAMNRARDAIFTFAL) folds into the HAMP domain. The 133-residue stretch at 471–603 (TAMFTDIYDF…DTVNVASRLE (133 aa)) folds into the Guanylate cyclase domain. Mg(2+) is bound by residues Asp476 and Asp520.

This sequence belongs to the adenylyl cyclase class-3 family. Requires Mg(2+) as cofactor.

The protein resides in the cell membrane. It catalyses the reaction ATP = 3',5'-cyclic AMP + diphosphate. Plays essential roles in regulation of cellular metabolism by catalyzing the synthesis of a second messenger, cAMP. The polypeptide is Adenylate cyclase 1 (cya1) (Rhizobium meliloti (strain 1021) (Ensifer meliloti)).